Consider the following 474-residue polypeptide: Viral protein TPX (474 aa).

Residues 268–474 (VTVTPISSPS…TPTSTTSSNI (207 aa)) form a disordered region. The span at 275 to 365 (SPSPTPTPTP…PTPTPTPTPT (91 aa)) shows a compositional bias: pro residues. Residues 278-367 (PTPTPTPTPT…PTPTPTPTPT (90 aa)) form a Thr-Pro(N) repeat. The 3 Thr-Pro repeats regions and two near identical repeats stretch occupies residues 278 to 467 (PTPTPTPTPT…PTPTPTPTPT (190 aa)). Positions 368 to 377 (YDITYVVFDV) form a repeat. A Thr-Pro(N) repeat occupies 378–436 (TPSPTPTPTPTPTPTPTPTPTPTPTPTPTPTPTPTPTPTPTPTPTPTPTPTPTPTPTPT). Residues 380–434 (SPTPTPTPTPTPTPTPTPTPTPTPTPTPTPTPTPTPTPTPTPTPTPTPTPTPTPT) are compositionally biased toward pro residues. Residues 437–446 (YDITYVIFDV) constitute a repeat. One copy of the Thr-Pro(N) repeat lies at 447-467 (TPSPTPTPTPTPTPTPTPTPT). Residues 449–465 (SPTPTPTPTPTPTPTPT) are compositionally biased toward pro residues.

In Thermoproteus tenax virus 1 (strain VT3) (TTV1), this protein is Viral protein TPX.